The following is a 237-amino-acid chain: 1-(5-phosphoribosyl)-5-[(5-phosphoribosylamino)methylideneamino] imidazole-4-carboxamide isomerase (237 aa).

Aspartate 8 (proton acceptor) is an active-site residue. Residue aspartate 130 is the Proton donor of the active site.

Belongs to the HisA/HisF family.

The protein resides in the cytoplasm. It catalyses the reaction 1-(5-phospho-beta-D-ribosyl)-5-[(5-phospho-beta-D-ribosylamino)methylideneamino]imidazole-4-carboxamide = 5-[(5-phospho-1-deoxy-D-ribulos-1-ylimino)methylamino]-1-(5-phospho-beta-D-ribosyl)imidazole-4-carboxamide. It participates in amino-acid biosynthesis; L-histidine biosynthesis; L-histidine from 5-phospho-alpha-D-ribose 1-diphosphate: step 4/9. The protein is 1-(5-phosphoribosyl)-5-[(5-phosphoribosylamino)methylideneamino] imidazole-4-carboxamide isomerase of Caldicellulosiruptor bescii (strain ATCC BAA-1888 / DSM 6725 / KCTC 15123 / Z-1320) (Anaerocellum thermophilum).